A 353-amino-acid chain; its full sequence is Keratocan (353 aa).

The first 21 residues, 1–21, serve as a signal peptide directing secretion; sequence MMTLKVCPSLLLLFLVHSVWT. The LRRNT domain maps to 34 to 72; that stretch reads EHWSHYTFECPQECFCPPSFPNALYCDNKGLKEIPAIPA. 2 disulfide bridges follow: C43/C49 and C47/C59. 10 LRR repeats span residues 73–94, 97–118, 123–143, 144–165, 168–188, 194–214, 215–236, 239–262, 264–283, and 284–305; these read RIWY…PFVN, HLRW…SGVL, RLLY…PLPV, GLEQ…VFSN, NLTM…QSDT, SLMQ…SIPA, NTLQ…YFSA, KVTF…GFNV, SILD…PINA, and HLEH…QICP. N-linked (GlcNAc...) (keratan sulfate) asparagine glycosylation is present at N94. The N-linked (GlcNAc...) asparagine glycan is linked to N168. N223 and N261 each carry an N-linked (GlcNAc...) (keratan sulfate) asparagine glycan. N299 carries an N-linked (GlcNAc...) asparagine glycan. C304 and C344 are joined by a disulfide.

Belongs to the small leucine-rich proteoglycan (SLRP) family. SLRP class II subfamily. Post-translationally, binds keratan sulfate chains.

The protein localises to the secreted. It is found in the extracellular space. Its subcellular location is the extracellular matrix. Plays an important role in generating and maintaining a transparent matrix within the corneal stroma. In Gallus gallus (Chicken), this protein is Keratocan (KERA).